The chain runs to 462 residues: MSLKIKSKITIGVLLIIFLLSIIFTLENVSLAQTSPQISVYKVVGSADLSNPGSAGYWSQIPWTNISLTANIPMAPTSGLTHYLLVKAAWNGSWIFILEEWQAPEPAFNAWSTAVAGIYPNASGPGLFRMIELTPGTTYSLERNYTNYVSIINGKEETGRIVFNYSGITLPAPNNTEITVMSNGTILLWHSPRPVEDLLYNDGMFYGYYVNSTWYYPDRAAIMWYLGSGVPTKDDMNIGGKYPGQQFDGITFKDAGGSLAQSGGSANIWMWVSGATWNNSTYDPAFKSNIWQNESLTGLSYVDSGNHGFAVPLYTNNTNMYEVDTAGIWYTPVASEGLNGSLFFIWTGAKYENGSWVVEFARPLSVPLDYQPFMPNITVGKTYYVAFAVWQGRLGETLFDKSITSSFLSLELVTTPPTSTTTSTSPVTTISSAIPPVTLYVTIIGVVVALVALVILYVVFRR.

Residues 1–8 (MSLKIKSK) lie on the Cytoplasmic side of the membrane. Residues 9-26 (ITIGVLLIIFLLSIIFTL) traverse the membrane as a helical segment. Topologically, residues 27–431 (ENVSLAQTSP…TSTSPVTTIS (405 aa)) are extracellular. Residues Asn-28, Asn-65, Asn-91, Asn-121, Asn-144, Asn-164, Asn-174, Asn-183, Asn-211, Asn-278, Asn-279, Asn-293, Asn-316, Asn-339, Asn-353, and Asn-376 are each glycosylated (N-linked (GlcNAc...) asparagine). A helical membrane pass occupies residues 432–456 (SAIPPVTLYVTIIGVVVALVALVIL). Over 457 to 462 (YVVFRR) the chain is Cytoplasmic.

Heme is required as a cofactor. In terms of processing, N-glycosylated on at least seven Asn residues by identical hexasaccharide units composed of Man, GlcNAc, Glc and 6-deoxy-6-sulfoglucose residues in the molar ration of 2:2:1:1. O-glycosylated on probably as many as 35 positions by single Man residues.

The protein resides in the cell membrane. Monoheme cytochrome whose physiological function is not yet clear. In Sulfolobus acidocaldarius (strain ATCC 33909 / DSM 639 / JCM 8929 / NBRC 15157 / NCIMB 11770), this protein is Cytochrome b558/566 subunit A (cbsA).